The chain runs to 406 residues: Glucose-6-phosphate isomerase (406 aa).

Residue E259 is the Proton donor of the active site. Active-site residues include H284 and K397.

Belongs to the GPI family.

It localises to the cytoplasm. The catalysed reaction is alpha-D-glucose 6-phosphate = beta-D-fructose 6-phosphate. Its pathway is carbohydrate biosynthesis; gluconeogenesis. The protein operates within carbohydrate degradation; glycolysis; D-glyceraldehyde 3-phosphate and glycerone phosphate from D-glucose: step 2/4. Catalyzes the reversible isomerization of glucose-6-phosphate to fructose-6-phosphate. The sequence is that of Glucose-6-phosphate isomerase from Campylobacter jejuni subsp. jejuni serotype O:2 (strain ATCC 700819 / NCTC 11168).